Consider the following 300-residue polypeptide: Acetylglutamate kinase (300 aa).

Residues 73–74, Arg95, and Asn197 each bind substrate; that span reads GG.

The protein belongs to the acetylglutamate kinase family. ArgB subfamily.

The protein localises to the cytoplasm. It catalyses the reaction N-acetyl-L-glutamate + ATP = N-acetyl-L-glutamyl 5-phosphate + ADP. It participates in amino-acid biosynthesis; L-arginine biosynthesis; N(2)-acetyl-L-ornithine from L-glutamate: step 2/4. Its function is as follows. Catalyzes the ATP-dependent phosphorylation of N-acetyl-L-glutamate. This Bordetella avium (strain 197N) protein is Acetylglutamate kinase.